The primary structure comprises 86 residues: Electron transfer flavoprotein regulatory factor 1 (86 aa).

It belongs to the complex I LYR family.

The protein resides in the mitochondrion. Its function is as follows. Acts as a regulator of the electron transfer flavoprotein by promoting the removal of flavin from the ETF holoenzyme (composed of ETFA and ETFB). The protein is Electron transfer flavoprotein regulatory factor 1 of Taeniopygia guttata (Zebra finch).